A 125-amino-acid polypeptide reads, in one-letter code: Multifunctional methyltransferase subunit TRM112-like protein (125 aa).

Residues 2–119 enclose the TRM112 domain; sequence KLLTHNLLSS…SRGIPNMLLS (118 aa). Phosphoserine occurs at positions 119 and 125.

It belongs to the TRM112 family. As to quaternary structure, part of the heterodimeric BUD23-TRM112 methyltransferase complex; this heterodimerization is necessary for the metabolic stability and activity of the catalytic subunit BUD23. Part of the heterodimeric N6AMT1-TRM112 methyltransferase complex; this heterodimerization is necessary for S-adenosyl-L-methionine-binding to N6AMT1/HEMK2. Part of the heterodimeric ALKBH8-TRM112 methyltransferase complex. Part of the heterodimeric METTL5-TRM112 methyltransferase complex; this heterodimerization is necessary for the stability of the catalytic subunit METTL5. Part of the heterodimeric THUMPD3-TRM112 methyltransferase complex; this complex forms an active tRNA methyltransferase, where TRMT112 acts as an activator of the catalytic subunit THUMPD3. Part of the heterodimeric THUMPD2-TRM112 methyltransferase complex; this complex forms an active tRNA methyltransferase, where TRMT112 acts as an activator of the catalytic subunit THUMPD2. Part of the heterodimeric TRMT11-TRM112 methyltransferase complex; this complex forms an active tRNA methyltransferase, where TRMT112 acts as an activator of the catalytic subunit TRMT11.

Its subcellular location is the nucleus. The protein localises to the nucleoplasm. The protein resides in the cytoplasm. It localises to the perinuclear region. In terms of biological role, acts as an activator of both rRNA/tRNA and protein methyltransferases. Together with methyltransferase BUD23, methylates the N(7) position of a guanine in 18S rRNA. The heterodimer with N6AMT1/HEMK2 catalyzes N5-methylation of ETF1 on 'Gln-185', using S-adenosyl L-methionine as methyl donor. The heterodimer with N6AMT1/HEMK2 also monomethylates 'Lys-12' of histone H4 (H4K12me1). The heterodimer with ALKBH8 catalyzes the methylation of 5-carboxymethyl uridine to 5-methylcarboxymethyl uridine at the wobble position of the anticodon loop in target tRNA species. Together with methyltransferase THUMPD3, catalyzes the formation of N(2)-methylguanosine at position 6 in a broad range of tRNA substrates and at position 7 of tRNA(Trp). Involved in the pre-rRNA processing steps leading to small-subunit rRNA production. Together with methyltransferase METTL5, specifically methylates the 6th position of adenine in position 1832 of 18S rRNA. This Homo sapiens (Human) protein is Multifunctional methyltransferase subunit TRM112-like protein.